We begin with the raw amino-acid sequence, 141 residues long: MAVERTFSIIKPKAVTKNVIGAIYTRFETAKLKIISAKMLLLTIEQAEGFYVEHKNRDFFTNLIQSITSGPVMIQVLEGENAVKRNREIMGETDPKKALAGTLRADFGDSLTDNALHGSDSLASAEREIAYFFKFDEIFSR.

Positions 11, 59, 87, 93, 104, and 114 each coordinate ATP. The active-site Pros-phosphohistidine intermediate is the His-117.

It belongs to the NDK family. In terms of assembly, homotetramer. The cofactor is Mg(2+).

It is found in the cytoplasm. The enzyme catalyses a 2'-deoxyribonucleoside 5'-diphosphate + ATP = a 2'-deoxyribonucleoside 5'-triphosphate + ADP. The catalysed reaction is a ribonucleoside 5'-diphosphate + ATP = a ribonucleoside 5'-triphosphate + ADP. In terms of biological role, major role in the synthesis of nucleoside triphosphates other than ATP. The ATP gamma phosphate is transferred to the NDP beta phosphate via a ping-pong mechanism, using a phosphorylated active-site intermediate. This chain is Nucleoside diphosphate kinase, found in Hamiltonella defensa subsp. Acyrthosiphon pisum (strain 5AT).